The primary structure comprises 188 residues: Der GTPase-activating protein YihI (188 aa).

2 disordered regions span residues 1–80 and 162–188; these read MKQP…VPVP and DEDD…KDTF. Residues 27–37 show a composition bias toward basic and acidic residues; the sequence is TRDELDAEARD. The segment covering 47–57 has biased composition (polar residues); sequence NRSGARTNVEG.

This sequence belongs to the YihI family. In terms of assembly, interacts with Der.

Functionally, a GTPase-activating protein (GAP) that modifies Der/EngA GTPase function. May play a role in ribosome biogenesis. This is Der GTPase-activating protein YihI from Yersinia pseudotuberculosis serotype O:1b (strain IP 31758).